We begin with the raw amino-acid sequence, 324 residues long: Protein ChrB (324 aa).

Functionally, together with ChrA1, this protein reduces chromate accumulation and is essential for chromate resistance, possibly as a regulatory protein. This is Protein ChrB from Cupriavidus metallidurans (strain ATCC 43123 / DSM 2839 / NBRC 102507 / CH34) (Ralstonia metallidurans).